A 188-amino-acid polypeptide reads, in one-letter code: Glutathione S-transferase 2 (188 aa).

One can recognise a GST N-terminal domain in the interval 2 to 79 (VHYKLMCFDV…FLARQYGYSG (78 aa)). Glutathione contacts are provided by residues K43, 49-51 (GQL), and 63-64 (QS). Residues 81–188 (TPTEEMQVDS…PHLNVFIRKL (108 aa)) form the GST C-terminal domain.

It belongs to the GST superfamily. Sigma family.

The catalysed reaction is RX + glutathione = an S-substituted glutathione + a halide anion + H(+). Its function is as follows. Conjugation of reduced glutathione to a wide number of exogenous and endogenous hydrophobic electrophiles. The chain is Glutathione S-transferase 2 (gst-2) from Caenorhabditis elegans.